The following is a 277-amino-acid chain: MEEEEHFVNIDLNDDNICSICKLETDTGTLSFCHVCFELSIEGISSATLLHSKSLRGHRDCFEKYHLIANQKLSRAKASHSTYEGVKRALSQRINRIIQYAQNRDSVTPENPGRWGAKQILCHTQQAGRKLVPQSDAQVPRYAPRWTEEASMVSESDYGKSMLDCHSAEELGLGLWPGERPQNREQRDSRQRRHSGHSREELMRKNVEELRQLNEQLLLQIQNVFEELSVVVQEKDSLSSELHVRHIAIEQLFKNCAKLPWLQIGRAGVKAANNPVE.

The interval 173–201 is disordered; that stretch reads LGLWPGERPQNREQRDSRQRRHSGHSREE. A coiled-coil region spans residues 197–229; the sequence is HSREELMRKNVEELRQLNEQLLLQIQNVFEELS.

Belongs to the EURL family.

Functionally, plays a role in cortical progenitor cell proliferation and differentiation. May promote dendritic spine development of post-migratory cortical projection neurons by modulating the beta-catenin signaling pathway. The polypeptide is Protein EURL homolog (Danio rerio (Zebrafish)).